Consider the following 804-residue polypeptide: Lon protease 2 (804 aa).

Residues 19–216 enclose the Lon N-terminal domain; sequence VPILPLRNSV…LVLAMVGRQL (198 aa). Position 367–374 (367–374) interacts with ATP; sequence GPPGVGKT. The region spanning 603-784 is the Lon proteolytic domain; the sequence is TLQPGVATGL…EEILPLVLEP (182 aa). Catalysis depends on residues Ser-690 and Lys-733. The interval 782–804 is disordered; sequence LEPPRRAPAQSASPEELEEQAGV.

The protein belongs to the peptidase S16 family. In terms of assembly, homohexamer. Organized in a ring with a central cavity.

Its subcellular location is the cytoplasm. It catalyses the reaction Hydrolysis of proteins in presence of ATP.. ATP-dependent serine protease that mediates the selective degradation of mutant and abnormal proteins as well as certain short-lived regulatory proteins. Required for cellular homeostasis and for survival from DNA damage and developmental changes induced by stress. Degrades polypeptides processively to yield small peptide fragments that are 5 to 10 amino acids long. Binds to DNA in a double-stranded, site-specific manner. The polypeptide is Lon protease 2 (Sorangium cellulosum (strain So ce56) (Polyangium cellulosum (strain So ce56))).